Here is a 206-residue protein sequence, read N- to C-terminus: LexA repressor (206 aa).

The H-T-H motif DNA-binding region spans 28 to 48; that stretch reads RAEIATRLGFKSANAAEEHLK. Active-site for autocatalytic cleavage activity residues include Ser123 and Lys160.

It belongs to the peptidase S24 family. Homodimer.

It catalyses the reaction Hydrolysis of Ala-|-Gly bond in repressor LexA.. Its function is as follows. Represses a number of genes involved in the response to DNA damage (SOS response), including recA and lexA. In the presence of single-stranded DNA, RecA interacts with LexA causing an autocatalytic cleavage which disrupts the DNA-binding part of LexA, leading to derepression of the SOS regulon and eventually DNA repair. The sequence is that of LexA repressor from Shewanella sp. (strain ANA-3).